A 2196-amino-acid chain; its full sequence is MEDGAQMRVVAFGDQTYDCSEAVSQLLRVRDDAIVVDFLERAPAVLKAELARLSSEQQEETPRFATLAELVPRYRAGTLNPAVSQALTCIAQLGLFIRQHSSGQEAYPTAHDSCITGVCTGALTAVAVGSASSVTALVPLALHTVAVAVRLGARAWEIGSCLADARRGANGRYASWTSAVGGISPQDLQDRISAYTAEQALASVSVPYLSAAVGPGQSSVSAAPVILDAFLSTLLRPLTTTRLPITAPYHAPHLFTAKDVQHVTDCLPPSEAWPTVRIPIISFSRDEAVSRGASFPAAMSEAVRDCLIRPIALDRMAVSITNHARDLGKDSVLPSPIALSFSDKLGPQVNSHLPGAKAPTPELTSKSIPSAIGAEQQPMAKSPIAILAASGRFPQSSSMDQFWDVLINGVDTHELVPPTRWNAATHVSEDPKAKNVSGTGFGCWLHEAGEFDAAYFNMSPREAPQVDPAQRLALLTATEALEQAGVVPNRTSSTQKNRVGVWYGATSNDWMETNSAQNVDTYFIPGGNRAFIPGRVNYFHKFSGPSYTIDTACSSSLAALHMACNALWRGEVDTAIVGGTNVLTNPDMTAGLDAGHFLSRSGNCKTFDDEADGYCRGEAVVTLILKRLPDAQADKDPIQASILGIATNHSAEAASITRPHAGAQQDLFQQVLTETGLTANDISVCEMHGTGTQAGDSGETTSVVETLAPLNRSGSAVRTTPLYIGAVKSNVGHAESAAGVSSLAKILLMLKHSKIPPHVGIKTKLNHRLPDLAARNTHIARSEVPWPRPKNGKRRVLLNNFSAAGGNTCLVLEDAPEPEDSQEVDPREHHIVALSAKTPDSMVNNLTNMITWIDKHSGDSLATLPQLSYTTTARRVHHRHRAVATGTDLLQIRSSLQEQLDRRVSGERSIPHPPNGPSFVLAFTGQGSAFAGMGVDLYKRFASFRSDIARYDQICEGMSLPSIKAMFEDEKVFSTASPTLQQLTHVCFQMALYRLWKSLGVQAKAVVGHSLGEYAALYAAGVLSQSDTLYLVGRRAQLMEKHLSQGTHAMLAVRAKEEAIVAAIDGPPGEAYEFSCRNGEQRNVLGGTVAQIQAAKAALEAKKIRCQYLDTPMAFHTGQVDPILPELLQVAAACSIQDPQIPVISPAYGKVIRSAKDFQPEYFTHHCRSSVNMVDALQSAVEEGLLDKNVIGLEIGPGPVVTQFVKEAVGTTMQTFASINKDKDTWQLMTQALAKFYLAGASVEWSRYHEDFPGAQKVLELPAYGWALKNYWLQYVNDWSLRKGDPAVVVAASNLELSSSIHKVITNTITANSDGELVVDADLSREDLHPMVQGHQVYGVPLCTPSVYADIALTLGEYIRQVIKPGEVAQTSVEVAEMNIQSALVANNTGRVQLLRTCAKFDPKAQVASCTFSSIVEQHANCKIRFGSLEKEKTALKSAALAAQASMAALKTQVGQDDNTYRFSKGMIYKMIGQLADFDEKYRGLCAITLDNDAMEASGKVSFKGIPNEGKFHSSPAYLDALSQLGGFVMNANEGVDLEKEVFVNHGWGSMRFFAALDPAMTYYTHVKMTQGKDKLWTGDVLIFDDKQALIGIVGGVALQGVPKRLMHYIVTAANKKASGPPTEKKTSSPPVEKKASAPVAPTRPAIQRKNASIPPPATQVTPQNKTIKTPSVSALIAPALEIVSEEIRMPIDELKDDIDFTDAGLDSLLSLVISSRMRDQLGIEFESAQFMEIGSIGGLKEFLTRLSPPVAVAVATAVEIVKEEALTSLEELTDPSPNEIGTVWRDALKILSEESGLTDEELTDDTSFADVGVDSLMSLVITSRLRDELDIDFPDRALFEECQTIFDLRKRFSGSTESFDSTTTKPSAGDATPPLTDSSASSPPSSEFDGETPMTDLDEVFDSPPAQKRIPSPPKGRIPPAWSMYLQGSQKRSKEILFLFPDGAGAATSYLSLPRLGEDIGVVAFNSPFMKTPHKFADHTLPDVIASYVEGIRGRQAQGPYHLGGWSAGGILAYAVAQELIAAGEEVSTLLLIDSPSPTKGLDRLPTRFFDHCTNVGLFGTELSRGSGGPNKTPEWLMPHFRASIELLHGYHAPPMKLGNKTKVMVIWAGECAFDGVRYAHIPPSAGDTDEDTEGMKFLTEKRKDFGATEWASLFPGTDVDARVVESEHHFSMMRDSGAQMLVEHMRDGLGIVSS.

The tract at residues 11–250 (AFGDQTYDCS…TRLPITAPYH (240 aa)) is N-terminal acylcarrier protein transacylase domain (SAT). The region spanning 381 to 814 (KSPIAILAAS…GGNTCLVLED (434 aa)) is the Ketosynthase family 3 (KS3) domain. Active-site for beta-ketoacyl synthase activity residues include Cys553, His688, and His733. A malonyl-CoA:ACP transacylase (MAT) domain region spans residues 922-1223 (AFTGQGSAFA…QTFASINKDK (302 aa)). The tract at residues 1298–1611 (SSSIHKVITN…VPKRLMHYIV (314 aa)) is product template (PT) domain. An N-terminal hotdog fold region spans residues 1302 to 1441 (HKVITNTITA…EKTALKSAAL (140 aa)). A PKS/mFAS DH domain is found at 1302 to 1608 (HKVITNTITA…LQGVPKRLMH (307 aa)). His1335 (proton acceptor; for dehydratase activity) is an active-site residue. The interval 1460 to 1608 (TYRFSKGMIY…LQGVPKRLMH (149 aa)) is C-terminal hotdog fold. The Proton donor; for dehydratase activity role is filled by Asp1520. Residues 1617–1666 (KASGPPTEKKTSSPPVEKKASAPVAPTRPAIQRKNASIPPPATQVTPQNK) form a disordered region. Over residues 1623–1636 (TEKKTSSPPVEKKA) the composition is skewed to basic and acidic residues. Carrier domains are found at residues 1671 to 1748 (PSVS…TRLS) and 1775 to 1857 (DPSP…SGST). O-(pantetheine 4'-phosphoryl)serine is present on residues Ser1708 and Ser1816. Over residues 1856 to 1867 (STESFDSTTTKP) the composition is skewed to polar residues. The tract at residues 1856-1923 (STESFDSTTT…PPKGRIPPAW (68 aa)) is disordered. Residues 1872 to 1887 (ATPPLTDSSASSPPSS) are compositionally biased toward low complexity. Residues 1937–2187 (ILFLFPDGAG…SGAQMLVEHM (251 aa)) are thioesterase (TE) domain.

Pantetheine 4'-phosphate is required as a cofactor.

It catalyses the reaction 6 malonyl-CoA + acetyl-CoA + 6 H(+) = nor-toralactone + 6 CO2 + 7 CoA + 2 H2O. It participates in mycotoxin biosynthesis. In terms of biological role, polyketide synthase; part of the gene cluster that mediates the biosynthesis of cercosporin, a light-activated, non-host-selective toxin. The perylenequinone chromophore of cercosporin absorbs light energy to attain an electronically-activated triplet state and produces active oxygen species such as the hydroxyl radical, superoxide, hydrogen peroxide or singlet oxygen upon reaction with oxygen molecules. These reactive oxygen species cause damage to various cellular components including lipids, proteins and nucleic acids. The first step of cercosporin biosynthesis is performed by the polyketide synthase CTB1 which catalyzes the formation of nor-toralactone. The starter unit acyltransferase (SAT) domain of CTB1 initiates polyketide extension by the selective utilization of acetyl-CoA, which is elongated to the heptaketide in the beta-ketoacyl synthase (KS) domain by successive condensations with six malonyl units introduced by the malonyl acyltransferase (MAT) domain. The product template (PT) domain catalyzes C4-C9 and C2-C11 aldol cyclizations and dehydrations to a trihydroxynaphthalene, which is thought to be delivered to the thioesterase (TE) domain for product release. The bifunctional enzyme CTB3 then methylates nor-toralactone to toralactone before conducting an unusual oxidative aromatic ring opening. The O-methyltransferase CTB2 further methylates the nascent OH-6 of the CBT3 product, blocking further oxidation at this site before the reductase CTB6 reduces the 2-oxopropyl ketone at position C7, giving naphthalene. The FAD-dependent monooxygenase CTB5 in concert with the multicopper oxidase CTB12 are responsible for homodimerization of naphthalene with CTB7 installing the dioxepine moiety, finally producing cercosporin. The fasciclin domain-containing protein CTB11 might act with CTB5 and CTB12 whereas the roles of CTB9 and CTB10 have still to be elucidated. In Cercospora nicotianae (Barn spot disease fungus), this protein is Non-reducing polyketide synthase CTB1.